The sequence spans 236 residues: Sugar fermentation stimulation protein homolog (236 aa).

The protein belongs to the SfsA family.

The protein is Sugar fermentation stimulation protein homolog of Synechococcus elongatus (strain ATCC 33912 / PCC 7942 / FACHB-805) (Anacystis nidulans R2).